Reading from the N-terminus, the 278-residue chain is Gap junction delta-3 protein (278 aa).

Residues 1–24 (MGEWAFLGSLLDAVQLQSPLVGRL) are Cytoplasmic-facing. A helical transmembrane segment spans residues 25-45 (WLVIMLIFRILVLATVGGAVF). Residues 46-76 (EDEQEEFVCNTLQPGCRQTCYDRAFPVSHYR) are Extracellular-facing. The chain crosses the membrane as a helical span at residues 77–97 (FWLFHILLLSAPPVLFVIYSM). Residues 98-136 (HQASKEAGGAQLAPPCARGRAEAPCSPCALRARRARRCY) lie on the Cytoplasmic side of the membrane. The chain crosses the membrane as a helical span at residues 137 to 157 (LLSVALRLLAELAFLGGQALL). At 158–188 (YGFRVDPHYACAGPPCPHTVDCFVSRPTEKT) the chain is on the extracellular side. A helical membrane pass occupies residues 189–209 (VFVVFYFAVGLLSALLSVAEL). The Cytoplasmic segment spans residues 210-278 (GHLLWKGRQR…LATVRQDLAI (69 aa)). Residues 223–278 (LPPPPPSPSLPSQRGDPDPFGPPAYAHRSPAGDSEGEGGSGHSKASLATVRQDLAI) form a disordered region.

The protein belongs to the connexin family. Delta-type subfamily. In terms of assembly, a connexon is composed of a hexamer of connexins.

The protein resides in the cell membrane. It localises to the cell junction. Its subcellular location is the gap junction. In terms of biological role, one gap junction consists of a cluster of closely packed pairs of transmembrane channels, the connexons, through which materials of low MW diffuse from one cell to a neighboring cell. The chain is Gap junction delta-3 protein (Gjd3) from Mus musculus (Mouse).